The chain runs to 466 residues: Soluble pyridine nucleotide transhydrogenase (466 aa).

36–45 (ERYQNVGGGC) contacts FAD.

Belongs to the class-I pyridine nucleotide-disulfide oxidoreductase family. It depends on FAD as a cofactor.

It localises to the cytoplasm. The enzyme catalyses NAD(+) + NADPH = NADH + NADP(+). Functionally, conversion of NADPH, generated by peripheral catabolic pathways, to NADH, which can enter the respiratory chain for energy generation. This is Soluble pyridine nucleotide transhydrogenase from Escherichia fergusonii (strain ATCC 35469 / DSM 13698 / CCUG 18766 / IAM 14443 / JCM 21226 / LMG 7866 / NBRC 102419 / NCTC 12128 / CDC 0568-73).